Consider the following 621-residue polypeptide: UvrABC system protein C (621 aa).

A GIY-YIG domain is found at 13–92 (EKPGVYLMKN…IKKYRPRYNI (80 aa)). Positions 204 to 239 (NEVINDLKIKMEKASSELKFEEAASFRDKLLAVEKI) constitute a UVR domain.

This sequence belongs to the UvrC family. As to quaternary structure, interacts with UvrB in an incision complex.

The protein localises to the cytoplasm. The UvrABC repair system catalyzes the recognition and processing of DNA lesions. UvrC both incises the 5' and 3' sides of the lesion. The N-terminal half is responsible for the 3' incision and the C-terminal half is responsible for the 5' incision. This Clostridium novyi (strain NT) protein is UvrABC system protein C.